Here is a 306-residue protein sequence, read N- to C-terminus: Putative B3 domain-containing protein Os03g0621600 (306 aa).

The segment at residues 29–122 (FSVLCLMPIM…QLKTLIFDSS (94 aa)) is a DNA-binding region (TF-B3 1). The interval 139–166 (YDIAMRNSQDEKKKRKQRDISRQGTVKP) is disordered. A DNA-binding region (TF-B3 2) is located at residues 210–306 (GYVMNNSSIH…VMDVHIIRRK (97 aa)).

It is found in the nucleus. This is Putative B3 domain-containing protein Os03g0621600 from Oryza sativa subsp. japonica (Rice).